A 473-amino-acid chain; its full sequence is Dolichyl-diphosphooligosaccharide--protein glycosyltransferase subunit 1B (473 aa).

The first 27 residues, 1 to 27 (MAPSLSTAVSSLLLLLLLAAAISVSSS), serve as a signal peptide directing secretion. Over 28–439 (PPMPEDSIRV…PFQVYYEFNP (412 aa)) the chain is Lumenal. N-linked (GlcNAc...) asparagine glycans are attached at residues N307 and N361. The chain crosses the membrane as a helical span at residues 440-460 (IFMLAEPLMLISAVFLFFVAC). Residues 461–473 (IAYLHMDLSIGKS) are Cytoplasmic-facing.

This sequence belongs to the OST1 family. As to quaternary structure, component of the oligosaccharyltransferase (OST) complex.

It is found in the endoplasmic reticulum membrane. It functions in the pathway protein modification; protein glycosylation. Its function is as follows. Subunit of the oligosaccharyl transferase (OST) complex that catalyzes the initial transfer of a defined glycan (Glc(3)Man(9)GlcNAc(2) in eukaryotes) from the lipid carrier dolichol-pyrophosphate to an asparagine residue within an Asn-X-Ser/Thr consensus motif in nascent polypeptide chains, the first step in protein N-glycosylation. N-glycosylation occurs cotranslationally and the complex associates with the Sec61 complex at the channel-forming translocon complex that mediates protein translocation across the endoplasmic reticulum (ER). All subunits are required for a maximal enzyme activity. The chain is Dolichyl-diphosphooligosaccharide--protein glycosyltransferase subunit 1B (OST1B) from Oryza sativa subsp. japonica (Rice).